Here is a 99-residue protein sequence, read N- to C-terminus: uncharacterized protein (99 aa).

This is an uncharacterized protein from Borreliella burgdorferi (strain ATCC 35210 / DSM 4680 / CIP 102532 / B31) (Borrelia burgdorferi).